The following is a 38-amino-acid chain: Photosystem I reaction center subunit IX (38 aa).

Residues 4 to 24 form a helical membrane-spanning segment; sequence FLTAAPVVAAIWFTATAGILI.

This sequence belongs to the PsaJ family.

It localises to the cellular thylakoid membrane. May help in the organization of the PsaE and PsaF subunits. This Synechococcus sp. (strain CC9605) protein is Photosystem I reaction center subunit IX.